Consider the following 589-residue polypeptide: Glucose starvation modulator protein 1 (589 aa).

The segment at residues 20 to 48 (CVFCHQKHLQCSNERPCKNCVKRNIGHEC) is a DNA-binding region (zn(2)-C6 fungal-type). Disordered stretches follow at residues 59-90 (LTGNGKGSSSKTKTPRKKLKSTPITASSPSVA), 218-240 (NNSNNTSHNDNFIAQNNNNNPEP), and 340-362 (ANGQTEDLLDHNKDDSRKNPGNG). A compositionally biased stretch (polar residues) spans 80-90 (TPITASSPSVA). A compositionally biased stretch (basic and acidic residues) spans 347–357 (LLDHNKDDSRK). The 72-residue stretch at 471–542 (SLLDYKKLVE…FKFFKNIAVN (72 aa)) folds into the PAS domain.

The protein belongs to the ERT1/acuK family.

The protein resides in the nucleus. Functionally, transcription factor which regulates nonfermentable carbon utilization. This Candida tropicalis (strain ATCC MYA-3404 / T1) (Yeast) protein is Glucose starvation modulator protein 1 (GSM1).